Reading from the N-terminus, the 188-residue chain is MTKLIIISAPSGTGKSTVIERLLTDRELNLHFSISATSRAPRGEEQNGREYYFLSPEEFRRRIEANEFVEYEEVYRDKYYGTLKSEVERILKEEKNVIFDVDVVGAQSIKKYYGDRALAIFILPPSIEELRSRLQKRGTDSMETIKQRVDKAEKEIGYAHLFDLRFVNDDLVTCVEQIRKAIAQFIAK.

In terms of domain architecture, Guanylate kinase-like spans 2–183 (TKLIIISAPS…CVEQIRKAIA (182 aa)). 9 to 16 (APSGTGKS) provides a ligand contact to ATP.

It belongs to the guanylate kinase family.

Its subcellular location is the cytoplasm. The catalysed reaction is GMP + ATP = GDP + ADP. Its function is as follows. Essential for recycling GMP and indirectly, cGMP. The protein is Guanylate kinase of Porphyromonas gingivalis (strain ATCC BAA-308 / W83).